Here is a 372-residue protein sequence, read N- to C-terminus: Maltose/maltodextrin import ATP-binding protein MalK (372 aa).

The ABC transporter domain maps to 4–234; sequence VTLKNVCKAY…PQNRFVAGFI (231 aa). 36 to 43 contacts ATP; the sequence is GPSGCGKS.

The protein belongs to the ABC transporter superfamily. Maltooligosaccharide importer (TC 3.A.1.1.1) family. In terms of assembly, the complex is composed of two ATP-binding proteins (MalK), two transmembrane proteins (MalG and MalK) and a solute-binding protein (MalE).

It localises to the cell inner membrane. It carries out the reaction D-maltose(out) + ATP + H2O = D-maltose(in) + ADP + phosphate + H(+). Its function is as follows. Part of the ABC transporter complex MalEFGK involved in maltose/maltodextrin import. Responsible for energy coupling to the transport system. This is Maltose/maltodextrin import ATP-binding protein MalK from Vibrio parahaemolyticus serotype O3:K6 (strain RIMD 2210633).